The sequence spans 381 residues: Bifunctional polyhydroxybutyrate synthase / ABC transporter periplasmic binding protein (381 aa).

The first 22 residues, M1–A22, serve as a signal peptide directing secretion.

The protein belongs to the bacterial solute-binding protein PotD/PotF family.

It localises to the periplasm. The catalysed reaction is (3R)-3-hydroxybutanoyl-CoA + [(3R)-hydroxybutanoate](n) = [(3R)-hydroxybutanoate](n+1) + CoA. In terms of biological role, catalyzes the formation of short polymers of R-3-hydroxybutyrate (cPHB). Involved in natural transformation. Probably part of the ABC transporter complex YdcSTUV. During natural transformation, may bind dsDNA and convey it to the inner membrane channel formed by YdcV. The sequence is that of Bifunctional polyhydroxybutyrate synthase / ABC transporter periplasmic binding protein (ydcS) from Escherichia coli (strain K12).